The chain runs to 183 residues: ATP-dependent protease subunit HslV (183 aa).

Thr12 is a catalytic residue. Na(+) is bound by residues Ala166, Cys169, and Thr172.

This sequence belongs to the peptidase T1B family. HslV subfamily. A double ring-shaped homohexamer of HslV is capped on each side by a ring-shaped HslU homohexamer. The assembly of the HslU/HslV complex is dependent on binding of ATP.

Its subcellular location is the cytoplasm. It catalyses the reaction ATP-dependent cleavage of peptide bonds with broad specificity.. Allosterically activated by HslU binding. Protease subunit of a proteasome-like degradation complex believed to be a general protein degrading machinery. This Afipia carboxidovorans (strain ATCC 49405 / DSM 1227 / KCTC 32145 / OM5) (Oligotropha carboxidovorans) protein is ATP-dependent protease subunit HslV.